We begin with the raw amino-acid sequence, 385 residues long: Heat-inducible transcription repressor HrcA (385 aa).

The protein belongs to the HrcA family.

Negative regulator of class I heat shock genes (grpE-dnaK-dnaJ and groELS operons). Prevents heat-shock induction of these operons. In Protochlamydia amoebophila (strain UWE25), this protein is Heat-inducible transcription repressor HrcA.